The primary structure comprises 52 residues: UPF0391 membrane protein XOO4217 (52 aa).

Transmembrane regions (helical) follow at residues 5–25 (AMIF…GIAG) and 27–47 (ATNI…ISMF).

It belongs to the UPF0391 family.

The protein resides in the cell membrane. The protein is UPF0391 membrane protein XOO4217 of Xanthomonas oryzae pv. oryzae (strain KACC10331 / KXO85).